A 288-amino-acid chain; its full sequence is MNLKLASSPHELRTCLAGRAFVLVPTMGALHEGHIWLVDMARRCNLPVVVSIFVNPLQFDDSLDLDTYPRTLEQDLEKLEGKAFAVYSPSVETMYPNGLDSIRIDPGPIGRILEGAIRPGFFDGILTIVAKLLLQTAPERVFFSKKDAQQAFLVRRMVRELAFPVRVEVTGFLRDKFSLPYSSRNRKLGVDAREKAQRLSQGLLSVVNNGPLTVRDCIDKITDLANSIGVDLGYAQILDENFCEIASDRMVTRAFHSEACIGLNTPLFLLAARVHGVRVVDNVDLVVV.

27-34 contributes to the ATP binding site; it reads MGALHEGH. H34 acts as the Proton donor in catalysis. Residues Q58 and Q150 each contribute to the (R)-pantoate site. Residue Q58 coordinates beta-alanine. ATP is bound by residues L173 and 181–184; that span reads YSSR.

Belongs to the pantothenate synthetase family. Homodimer.

It is found in the cytoplasm. The enzyme catalyses (R)-pantoate + beta-alanine + ATP = (R)-pantothenate + AMP + diphosphate + H(+). It participates in cofactor biosynthesis; (R)-pantothenate biosynthesis; (R)-pantothenate from (R)-pantoate and beta-alanine: step 1/1. Its function is as follows. Catalyzes the condensation of pantoate with beta-alanine in an ATP-dependent reaction via a pantoyl-adenylate intermediate. The protein is Pantothenate synthetase of Tropheryma whipplei (strain TW08/27) (Whipple's bacillus).